Consider the following 469-residue polypeptide: Glutamate--tRNA ligase (469 aa).

Positions 9–19 match the 'HIGH' region motif; the sequence is PSPTGFLHVGG. Zn(2+)-binding residues include Cys-98, Cys-100, Cys-125, and Asp-127. The short motif at 236-240 is the 'KMSKS' region element; sequence KLSKR. Lys-239 contributes to the ATP binding site.

Belongs to the class-I aminoacyl-tRNA synthetase family. Glutamate--tRNA ligase type 1 subfamily. Monomer. Requires Zn(2+) as cofactor.

It is found in the cytoplasm. The catalysed reaction is tRNA(Glu) + L-glutamate + ATP = L-glutamyl-tRNA(Glu) + AMP + diphosphate. Functionally, catalyzes the attachment of glutamate to tRNA(Glu) in a two-step reaction: glutamate is first activated by ATP to form Glu-AMP and then transferred to the acceptor end of tRNA(Glu). The polypeptide is Glutamate--tRNA ligase (Shewanella putrefaciens (strain CN-32 / ATCC BAA-453)).